Consider the following 134-residue polypeptide: FK506-binding protein 2 (134 aa).

The N-terminal stretch at 1–19 (MRFSIFSTLLVSLATLSTA) is a signal peptide. The PPIase FKBP-type domain occupies 39–127 (GDTVQMHYKG…IFETELVGID (89 aa)). The Prevents secretion from ER motif lies at 131-134 (KDEL).

This sequence belongs to the FKBP-type PPIase family. FKBP2 subfamily.

The protein resides in the endoplasmic reticulum. It catalyses the reaction [protein]-peptidylproline (omega=180) = [protein]-peptidylproline (omega=0). Its activity is regulated as follows. Inhibited by both FK506 and rapamycin. Its function is as follows. PPIases accelerate the folding of proteins. It catalyzes the cis-trans isomerization of proline imidic peptide bonds in oligopeptides. The sequence is that of FK506-binding protein 2 (fpr2) from Aspergillus oryzae (strain ATCC 42149 / RIB 40) (Yellow koji mold).